A 422-amino-acid chain; its full sequence is 3-isopropylmalate dehydratase large subunit (422 aa).

Positions 303, 363, and 366 each coordinate [4Fe-4S] cluster.

This sequence belongs to the aconitase/IPM isomerase family. LeuC type 2 subfamily. In terms of assembly, heterodimer of LeuC and LeuD. Requires [4Fe-4S] cluster as cofactor.

The enzyme catalyses (2R,3S)-3-isopropylmalate = (2S)-2-isopropylmalate. The protein operates within amino-acid biosynthesis; L-leucine biosynthesis; L-leucine from 3-methyl-2-oxobutanoate: step 2/4. Its function is as follows. Catalyzes the isomerization between 2-isopropylmalate and 3-isopropylmalate, via the formation of 2-isopropylmaleate. The polypeptide is 3-isopropylmalate dehydratase large subunit (Wolinella succinogenes (strain ATCC 29543 / DSM 1740 / CCUG 13145 / JCM 31913 / LMG 7466 / NCTC 11488 / FDC 602W) (Vibrio succinogenes)).